Here is a 529-residue protein sequence, read N- to C-terminus: MQQRRPIRRALLSVSDKAGIVEFAQALSHRGVELLSTGGTARLLADAGLAVTEVSDYTGFPEMMDGRVKTLHPKVHGGILGRRDQDDAIMAQHDIKPIDIVVVNLYPFAQTVARENCTLEDAVENIDIGGPTMVRSAAKNHKDVAIVVKSSDYSAIINEIDANEGSLTYETRFDLAIKAFEHTAAYDSMIANYFGALVPPYHGETDKPSGNFPRTLNLNYIKKQDMRYGENSHQQAAFYIEENIHEASVATSTQLQGKALSYNNIADTDAALECVKEFAEPACVIVKHANPSGVAIGGSILDAYERAYKTDPTSAFGGIIAFNRELDEETAQAIISRQFVEVIIAPSASEAALKVTAAKQNVRVLTSGNWQQRVPGLDFKRVNGGLLIQDRDLGMVDASQLRVVTERQPSEQELRDALFCWKVAKFVKSNAIVYARDNMTIGIGAGQMSRVYSAKIAGIKAGDEGLEVKGSAMASDAFFPFRDGIDAAAAVGITCVIQPGGSIRDDEVIAAANEHGIAMIFTDMRHFRH.

Residues 1-148 (MQQRRPIRRA…KNHKDVAIVV (148 aa)) enclose the MGS-like domain.

The protein belongs to the PurH family.

The catalysed reaction is (6R)-10-formyltetrahydrofolate + 5-amino-1-(5-phospho-beta-D-ribosyl)imidazole-4-carboxamide = 5-formamido-1-(5-phospho-D-ribosyl)imidazole-4-carboxamide + (6S)-5,6,7,8-tetrahydrofolate. The enzyme catalyses IMP + H2O = 5-formamido-1-(5-phospho-D-ribosyl)imidazole-4-carboxamide. Its pathway is purine metabolism; IMP biosynthesis via de novo pathway; 5-formamido-1-(5-phospho-D-ribosyl)imidazole-4-carboxamide from 5-amino-1-(5-phospho-D-ribosyl)imidazole-4-carboxamide (10-formyl THF route): step 1/1. The protein operates within purine metabolism; IMP biosynthesis via de novo pathway; IMP from 5-formamido-1-(5-phospho-D-ribosyl)imidazole-4-carboxamide: step 1/1. The polypeptide is Bifunctional purine biosynthesis protein PurH (Pectobacterium carotovorum subsp. carotovorum (strain PC1)).